The following is a 480-amino-acid chain: uncharacterized protein (480 aa).

The PUA domain maps to 131 to 207 (KKIIKIKNDV…KVVKVRFFIK (77 aa)).

It in the C-terminal section; belongs to the PAPS reductase family.

This is an uncharacterized protein from Methanocaldococcus jannaschii (strain ATCC 43067 / DSM 2661 / JAL-1 / JCM 10045 / NBRC 100440) (Methanococcus jannaschii).